Consider the following 67-residue polypeptide: ATP synthase protein 8 (67 aa).

A helical membrane pass occupies residues 8–24; it reads TWFITITSMTITLFIMF. N6-acetyllysine; alternate is present on Lys-54. Lys-54 bears the N6-succinyllysine; alternate mark. At Lys-57 the chain carries N6-acetyllysine.

The protein belongs to the ATPase protein 8 family. In terms of assembly, F-type ATPases have 2 components, CF(1) - the catalytic core - and CF(0) - the membrane proton channel. Component of an ATP synthase complex composed of ATP5PB, ATP5MC1, ATP5F1E, ATP5PD, ATP5ME, ATP5PF, ATP5MF, MT-ATP6, MT-ATP8, ATP5F1A, ATP5F1B, ATP5F1D, ATP5F1C, ATP5PO, ATP5MG, ATP5MK and ATP5MJ. Interacts with PRICKLE3.

The protein localises to the mitochondrion membrane. Its function is as follows. Mitochondrial membrane ATP synthase (F(1)F(0) ATP synthase or Complex V) produces ATP from ADP in the presence of a proton gradient across the membrane which is generated by electron transport complexes of the respiratory chain. F-type ATPases consist of two structural domains, F(1) - containing the extramembraneous catalytic core and F(0) - containing the membrane proton channel, linked together by a central stalk and a peripheral stalk. During catalysis, ATP synthesis in the catalytic domain of F(1) is coupled via a rotary mechanism of the central stalk subunits to proton translocation. Part of the complex F(0) domain. Minor subunit located with subunit a in the membrane. The polypeptide is ATP synthase protein 8 (MT-ATP8) (Rhinoceros unicornis (Greater Indian rhinoceros)).